Reading from the N-terminus, the 228-residue chain is 7-cyano-7-deazaguanine synthase (228 aa).

Position 8 to 18 (8 to 18) interacts with ATP; sequence LSGGLDSTTCL. Zn(2+)-binding residues include Cys188, Cys198, Cys201, and Cys204.

Belongs to the QueC family. Requires Zn(2+) as cofactor.

The catalysed reaction is 7-carboxy-7-deazaguanine + NH4(+) + ATP = 7-cyano-7-deazaguanine + ADP + phosphate + H2O + H(+). It functions in the pathway purine metabolism; 7-cyano-7-deazaguanine biosynthesis. Its function is as follows. Catalyzes the ATP-dependent conversion of 7-carboxy-7-deazaguanine (CDG) to 7-cyano-7-deazaguanine (preQ(0)). This Legionella pneumophila (strain Paris) protein is 7-cyano-7-deazaguanine synthase.